The primary structure comprises 307 residues: Cytidine deaminase 7 (307 aa).

2 CMP/dCMP-type deaminase domains span residues 22-155 (TEPI…FTPD) and 185-307 (SDCS…FITE). A substrate-binding site is contributed by 63–65 (NVE). H76 contributes to the Zn(2+) binding site. Catalysis depends on E78, which acts as the Proton donor. Zn(2+) contacts are provided by C111 and C114.

The protein belongs to the cytidine and deoxycytidylate deaminase family. As to quaternary structure, homodimer. It depends on Zn(2+) as a cofactor.

The catalysed reaction is cytidine + H2O + H(+) = uridine + NH4(+). The enzyme catalyses 2'-deoxycytidine + H2O + H(+) = 2'-deoxyuridine + NH4(+). Functionally, this enzyme scavenges exogenous and endogenous cytidine and 2'-deoxycytidine for UMP synthesis. The polypeptide is Cytidine deaminase 7 (CDA7) (Arabidopsis thaliana (Mouse-ear cress)).